Here is a 382-residue protein sequence, read N- to C-terminus: MGEEAPEFRVESVALESKDCLQNAIDIGDKTYVISRSDDPKSSITIKILDKLTQTWVVPTVLGAPPNPTSSHSAVLVNNEKILIIEKGVPLNDSIWFLEVDTPFVKQQSKIKGTVVVAWSKGVIGEGQKPIVISGPSGVGKGTLIAKLMKEYPSKFGFSVSHTTRAPREKEIDGVHYHFTERSKIEEEISEGKFLEFAHVHGNVYGTSVEAVESVTDEGKRCILDIDVQGARSVRASSLEAIFIFVCPPSFEELEKRLRARGTETEEQIQKRLRNARAELDQSNSPGLFDHLLVNDDLEACYENLKKLLSLDDDHEDSNDSFIKDGKETACYSILSKTNSEILLQSETNEAEKGTTNLLSLDLSLSGGAPGRTRGLKISPVN.

Positions 128 to 310 constitute a Guanylate kinase-like domain; sequence QKPIVISGPS…CYENLKKLLS (183 aa). 135 to 142 is an ATP binding site; that stretch reads GPSGVGKG. Catalysis depends on residues Arg168, Arg261, and Arg272. 2 residues coordinate ATP: Asn295 and Asp296.

Belongs to the guanylate kinase family. Monomer.

It is found in the cytoplasm. The protein localises to the nucleus. The catalysed reaction is GMP + ATP = GDP + ADP. Functionally, essential for recycling GMP and indirectly, cGMP. In Oryza sativa subsp. japonica (Rice), this protein is Guanylate kinase 1 (GK1).